The following is a 481-amino-acid chain: Glutamate--tRNA ligase (481 aa).

The 'HIGH' region signature appears at 11–21; that stretch reads PSPTGLLHIGN. Positions 255–259 match the 'KMSKS' region motif; it reads KLSKR. Lysine 258 is an ATP binding site.

It belongs to the class-I aminoacyl-tRNA synthetase family. Glutamate--tRNA ligase type 1 subfamily. As to quaternary structure, monomer.

It is found in the cytoplasm. The catalysed reaction is tRNA(Glu) + L-glutamate + ATP = L-glutamyl-tRNA(Glu) + AMP + diphosphate. Catalyzes the attachment of glutamate to tRNA(Glu) in a two-step reaction: glutamate is first activated by ATP to form Glu-AMP and then transferred to the acceptor end of tRNA(Glu). In Streptococcus pyogenes serotype M6 (strain ATCC BAA-946 / MGAS10394), this protein is Glutamate--tRNA ligase.